Reading from the N-terminus, the 465-residue chain is 3-isopropylmalate dehydratase large subunit (465 aa).

Positions 347, 407, and 410 each coordinate [4Fe-4S] cluster. A disordered region spans residues 416–443 (DTLRPGERSASTSNRNFEGRQGPGGRTH).

It belongs to the aconitase/IPM isomerase family. LeuC type 1 subfamily. Heterodimer of LeuC and LeuD. Requires [4Fe-4S] cluster as cofactor.

The enzyme catalyses (2R,3S)-3-isopropylmalate = (2S)-2-isopropylmalate. It functions in the pathway amino-acid biosynthesis; L-leucine biosynthesis; L-leucine from 3-methyl-2-oxobutanoate: step 2/4. In terms of biological role, catalyzes the isomerization between 2-isopropylmalate and 3-isopropylmalate, via the formation of 2-isopropylmaleate. The sequence is that of 3-isopropylmalate dehydratase large subunit from Frankia casuarinae (strain DSM 45818 / CECT 9043 / HFP020203 / CcI3).